Here is a 331-residue protein sequence, read N- to C-terminus: DNA polymerase IV (331 aa).

A UmuC domain is found at 1–174 (FFAAVEMRDN…LPLAKIPGVG (174 aa)). Residue Asp-92 coordinates Mg(2+). Residue Glu-93 is part of the active site.

Belongs to the DNA polymerase type-Y family. As to quaternary structure, monomer. Mg(2+) serves as cofactor.

Its subcellular location is the cytoplasm. It carries out the reaction DNA(n) + a 2'-deoxyribonucleoside 5'-triphosphate = DNA(n+1) + diphosphate. Functionally, poorly processive, error-prone DNA polymerase involved in untargeted mutagenesis. Copies undamaged DNA at stalled replication forks, which arise in vivo from mismatched or misaligned primer ends. These misaligned primers can be extended by PolIV. Exhibits no 3'-5' exonuclease (proofreading) activity. May be involved in translesional synthesis, in conjunction with the beta clamp from PolIII. This Escherichia fergusonii protein is DNA polymerase IV.